Here is a 130-residue protein sequence, read N- to C-terminus: C-C motif chemokine 28 (130 aa).

The N-terminal stretch at 1 to 16 (MQQAGLTLMAVAVCVA) is a signal peptide. 2 cysteine pairs are disulfide-bonded: C30–C58 and C31–C73. N78 is a glycosylation site (N-linked (GlcNAc...) asparagine). The tract at residues 92 to 130 (KNGRENVCSGKKQPSRKDRKGHTTRKHRTRGTHRHEASR) is disordered. Basic residues predominate over residues 104–124 (QPSRKDRKGHTTRKHRTRGTH).

The protein belongs to the intercrine beta (chemokine CC) family. Mainly expressed in testis, epithelial cells of normal colon, kidney, Peyer patches, lymph nodes. Also found in lower levels in brain, spleen and lung.

It is found in the secreted. Its function is as follows. Chemotactic for resting CD4, CD8 T-cells and eosinophils. Binds to CCR10 and induces calcium mobilization in a dose-dependent manner. This is C-C motif chemokine 28 (Ccl28) from Mus musculus (Mouse).